A 780-amino-acid polypeptide reads, in one-letter code: Vacuolar protein sorting-associated protein 51 homolog (780 aa).

At Ala-2 the chain carries N-acetylalanine. Disordered stretches follow at residues 270 to 292 and 615 to 651; these read STLV…PAKI and QGTF…SNSQ. The segment covering 273–284 has biased composition (acidic residues); it reads VEDDDSSNDTES. Low complexity predominate over residues 626-639; that stretch reads SNGSNTTTSSRSNT.

It belongs to the VPS51 family. Component of the Golgi-associated retrograde protein (GARP) complex, composed by VPS51, VPS52, VPS53 and VPS54. Component of the endosome-associated retrograde protein (EARP) complex, composed of VPS51, VPS52, VPS53 and VPS50. Interacts with VPS52. In terms of tissue distribution, expressed in primary and lateral roots, shoots of seedlings and flowers.

It localises to the golgi apparatus. The protein resides in the trans-Golgi network. The protein localises to the recycling endosome. Its subcellular location is the prevacuolar compartment. Its function is as follows. Acts as a component of the GARP complex that is involved in retrograde transport from early and late endosomes to the trans-Golgi network (TGN). The GARP complex is required for the maintenance of protein retrieval from endosomes to the TGN, acid hydrolase sorting, lysosome function, endosomal cholesterol traffic and autophagy. VPS51 participates in retrograde transport of acid hydrolase receptors, likely by promoting tethering and SNARE-dependent fusion of endosome-derived carriers to the TGN. Acts as a component of the EARP complex that is involved in endocytic recycling. The EARP complex associates with Rab4-positive endosomes and promotes recycling of internalized transferrin receptor (TFRC) to the plasma membrane. Required for vacuolar targeting and cellular trafficking. Involved in the regulation of vascular tissue patterning, probably by regulating PIN1 expression pattern, thus modulating auxin flux. Important to prevent PIN1 accumulation within margin cells, possibly by targeting PIN1 to the lytic vacuole. Regulates PIN1 and ATHB8 expression pattern in secondary veins. The polypeptide is Vacuolar protein sorting-associated protein 51 homolog (Arabidopsis thaliana (Mouse-ear cress)).